We begin with the raw amino-acid sequence, 374 residues long: Glutamate 5-kinase (374 aa).

Position 9 (Lys9) interacts with ATP. 3 residues coordinate substrate: Ser49, Asp136, and Asn148. Residues 168–169 and 210–216 contribute to the ATP site; these read TD and TGGMRSK. The PUA domain occupies 276–354; that stretch reads AGMITVDSGA…EEARQYSYLH (79 aa).

This sequence belongs to the glutamate 5-kinase family.

The protein resides in the cytoplasm. The enzyme catalyses L-glutamate + ATP = L-glutamyl 5-phosphate + ADP. It participates in amino-acid biosynthesis; L-proline biosynthesis; L-glutamate 5-semialdehyde from L-glutamate: step 1/2. Functionally, catalyzes the transfer of a phosphate group to glutamate to form L-glutamate 5-phosphate. This Geobacillus kaustophilus (strain HTA426) protein is Glutamate 5-kinase.